The chain runs to 190 residues: Apolipoprotein M (190 aa).

Residues 1–17 (MFHQVWAALLYLYGLLF) form the signal peptide. Intrachain disulfides connect cysteine 23/cysteine 169, cysteine 95/cysteine 185, and cysteine 130/cysteine 159. Residues glutamate 138 and arginine 145 each coordinate tetradecanoate.

Belongs to the calycin superfamily. Lipocalin family. Highly divergent. Interacts with LRP2; LRP2 mediates APOM renal uptake and subsequent lysosomal degradation. Expressed by the liver; secreted in plasma.

It localises to the secreted. Probably involved in lipid transport. Can bind sphingosine-1-phosphate, myristic acid, palmitic acid and stearic acid, retinol, all-trans-retinoic acid and 9-cis-retinoic acid. This Rattus norvegicus (Rat) protein is Apolipoprotein M (Apom).